A 403-amino-acid polypeptide reads, in one-letter code: Digeranylgeranylglycerophospholipid reductase 1 (403 aa).

FAD is bound by residues Ala-14, Asp-33, Cys-44, Ala-45, Gly-47, Arg-98, Val-122, Asp-277, Gly-289, and Ile-290.

This sequence belongs to the geranylgeranyl reductase family. DGGGPL reductase subfamily. FAD serves as cofactor.

It catalyses the reaction a 2,3-bis-O-phytanyl-sn-glycerol 1-phospholipid + 8 A = a 2,3-bis-O-(geranylgeranyl)-sn-glycerol 1-phospholipid + 8 AH2. The catalysed reaction is 2,3-bis-O-(phytanyl)-sn-glycerol 1-phosphate + 8 A = 2,3-bis-O-(geranylgeranyl)-sn-glycerol 1-phosphate + 8 AH2. The enzyme catalyses CDP-2,3-bis-O-(geranylgeranyl)-sn-glycerol + 8 AH2 = CDP-2,3-bis-O-(phytanyl)-sn-glycerol + 8 A. It carries out the reaction archaetidylserine + 8 AH2 = 2,3-bis-O-phytanyl-sn-glycero-3-phospho-L-serine + 8 A. Its pathway is membrane lipid metabolism; glycerophospholipid metabolism. Is involved in the reduction of 2,3-digeranylgeranylglycerophospholipids (unsaturated archaeols) into 2,3-diphytanylglycerophospholipids (saturated archaeols) in the biosynthesis of archaeal membrane lipids. Catalyzes the formation of archaetidic acid (2,3-di-O-phytanyl-sn-glyceryl phosphate) from 2,3-di-O-geranylgeranylglyceryl phosphate (DGGGP) via the hydrogenation of each double bond of the isoprenoid chains. Is also probably able to reduce double bonds of geranyl groups in CDP-2,3-bis-O-(geranylgeranyl)-sn-glycerol and archaetidylserine, thus acting at various stages in the biosynthesis of archaeal membrane lipids. The protein is Digeranylgeranylglycerophospholipid reductase 1 of Methanosphaera stadtmanae (strain ATCC 43021 / DSM 3091 / JCM 11832 / MCB-3).